The primary structure comprises 138 residues: uncharacterized protein (138 aa).

3 helical membrane-spanning segments follow: residues Ile17–Phe37, Phe43–Cys63, and Phe117–Leu137.

Its subcellular location is the cell membrane. This is an uncharacterized protein from Mycoplasma genitalium (strain ATCC 33530 / DSM 19775 / NCTC 10195 / G37) (Mycoplasmoides genitalium).